Here is a 216-residue protein sequence, read N- to C-terminus: UPF0502 protein VCM66_A0698 (216 aa).

This sequence belongs to the UPF0502 family.

In Vibrio cholerae serotype O1 (strain M66-2), this protein is UPF0502 protein VCM66_A0698.